Here is a 174-residue protein sequence, read N- to C-terminus: uncharacterized protein (174 aa).

Positions 42 to 174 constitute an N-acetyltransferase domain; the sequence is SSNKNINLYE…GVKGMFWYPR (133 aa).

Belongs to the acetyltransferase family. Ycf52 subfamily.

It localises to the plastid. Its subcellular location is the chloroplast. This is an uncharacterized protein from Pyropia yezoensis (Susabi-nori).